The following is a 256-amino-acid chain: Hydroxypyruvate/pyruvate aldolase (256 aa).

The active-site Proton acceptor is the H48. E152 and D178 together coordinate a divalent metal cation.

It belongs to the HpcH/HpaI aldolase family. Requires a divalent metal cation as cofactor.

The catalysed reaction is D-glyceraldehyde + pyruvate = 2-dehydro-3-deoxy-L-galactonate. Functionally, aldolase which can catalyze in vitro the aldolisation reaction between hydroxypyruvate (HPA) or pyruvate (PA) and D-glyceraldehyde (D-GA). The condensation of pyruvate and D-glyceraldehyde produces 2-dehydro-3-deoxy-L-galactonate as the major product. Has weak activity with hydroxypyruvate and D-glyceraldehyde. In Roseobacter denitrificans (strain ATCC 33942 / OCh 114) (Erythrobacter sp. (strain OCh 114)), this protein is Hydroxypyruvate/pyruvate aldolase.